The chain runs to 263 residues: Endonuclease 8 (263 aa).

The Schiff-base intermediate with DNA role is filled by P2. Residue E3 is the Proton donor of the active site. K53 acts as the Proton donor; for beta-elimination activity in catalysis. Q70, R125, and N169 together coordinate DNA. Residues 229-263 form an FPG-type zinc finger; the sequence is KVFHRDGEPCERCGSIIEKTTLSSRPFYWCPGCQH. Residue R253 is the Proton donor; for delta-elimination activity of the active site.

The protein belongs to the FPG family. Zn(2+) is required as a cofactor.

It carries out the reaction 2'-deoxyribonucleotide-(2'-deoxyribose 5'-phosphate)-2'-deoxyribonucleotide-DNA = a 3'-end 2'-deoxyribonucleotide-(2,3-dehydro-2,3-deoxyribose 5'-phosphate)-DNA + a 5'-end 5'-phospho-2'-deoxyribonucleoside-DNA + H(+). Its function is as follows. Involved in base excision repair of DNA damaged by oxidation or by mutagenic agents. Acts as a DNA glycosylase that recognizes and removes damaged bases. Has a preference for oxidized pyrimidines, such as thymine glycol, 5,6-dihydrouracil and 5,6-dihydrothymine. Has AP (apurinic/apyrimidinic) lyase activity and introduces nicks in the DNA strand. Cleaves the DNA backbone by beta-delta elimination to generate a single-strand break at the site of the removed base with both 3'- and 5'-phosphates. The chain is Endonuclease 8 from Escherichia coli O17:K52:H18 (strain UMN026 / ExPEC).